Consider the following 193-residue polypeptide: 7-methyl-GTP pyrophosphatase (193 aa).

Asp-70 acts as the Proton acceptor in catalysis.

The protein belongs to the Maf family. YceF subfamily. It depends on a divalent metal cation as a cofactor.

Its subcellular location is the cytoplasm. It carries out the reaction N(7)-methyl-GTP + H2O = N(7)-methyl-GMP + diphosphate + H(+). Functionally, nucleoside triphosphate pyrophosphatase that hydrolyzes 7-methyl-GTP (m(7)GTP). May have a dual role in cell division arrest and in preventing the incorporation of modified nucleotides into cellular nucleic acids. The chain is 7-methyl-GTP pyrophosphatase from Vibrio parahaemolyticus serotype O3:K6 (strain RIMD 2210633).